A 452-amino-acid polypeptide reads, in one-letter code: MTTSAPTEKLPLYRSLYFQVVCAVIAGVALGYFYPSVGESMKPLGDGFIKLIKMMIAPIIFCTVVVGIAGMEDMKKVGKTGGLALLYFEVVSTFALIIGLLLVNLFQPGAGMNIDAATLDTKSIAAYTGPGKMVSTTDFILNVIPTAFVDAFAKGEILQVLLLAILFGFALHRFGGRGTLVFDMIEKSSHVLFTIVGFIMKVAPIGAFGAMAFTIGKYGVGSLFSLGKLMGAFYLTCLIFIFGVLGAIARIHGFSVWKFIKYIKEELLIVLGTSSSESVLPRMMEKMENLGAKKTTVGLVIPTGYSFNLDGTSIYLTMAAVFIAQATNTPMTLMQEITLLGVLLLTSKGAAGVTGSGFIVLAATLSAVGTVPVAGLALILGIDRFMSEARALTNLIGNGVATLVVAKWTNELDMERLQAGLNNETWEEAQEPERVLDKKTEHMPVSAMSDAG.

9 consecutive transmembrane segments (helical) span residues 18-38 (FQVV…PSVG), 51-71 (LIKM…IAGM), 83-103 (LALL…LLLV), 151-171 (AFAK…GFAL), 191-211 (VLFT…FGAM), 229-249 (LMGA…GAIA), 304-324 (GYSF…VFIA), 337-357 (ITLL…TGSG), and 359-379 (IVLA…LALI). Residues 426–452 (WEEAQEPERVLDKKTEHMPVSAMSDAG) form a disordered region. Residues 431–442 (EPERVLDKKTEH) are compositionally biased toward basic and acidic residues.

This sequence belongs to the dicarboxylate/amino acid:cation symporter (DAACS) (TC 2.A.23) family.

Its subcellular location is the cell inner membrane. Functionally, responsible for the transport of dicarboxylates such as succinate, fumarate, and malate from the periplasm across the membrane. The polypeptide is C4-dicarboxylate transport protein 1 (Polaromonas naphthalenivorans (strain CJ2)).